The primary structure comprises 700 residues: Elongation factor G (700 aa).

The region spanning 8–290 (DRYRNVGIMA…AMIMYMPSPL (283 aa)) is the tr-type G domain. GTP-binding positions include 17–24 (AHIDAGKT), 88–92 (DTPGH), and 142–145 (NKMD).

The protein belongs to the TRAFAC class translation factor GTPase superfamily. Classic translation factor GTPase family. EF-G/EF-2 subfamily.

Its subcellular location is the cytoplasm. Catalyzes the GTP-dependent ribosomal translocation step during translation elongation. During this step, the ribosome changes from the pre-translocational (PRE) to the post-translocational (POST) state as the newly formed A-site-bound peptidyl-tRNA and P-site-bound deacylated tRNA move to the P and E sites, respectively. Catalyzes the coordinated movement of the two tRNA molecules, the mRNA and conformational changes in the ribosome. This Vesicomyosocius okutanii subsp. Calyptogena okutanii (strain HA) protein is Elongation factor G.